Consider the following 170-residue polypeptide: Urease accessory protein UreE (170 aa).

The protein belongs to the UreE family.

The protein localises to the cytoplasm. Its function is as follows. Involved in urease metallocenter assembly. Binds nickel. Probably functions as a nickel donor during metallocenter assembly. The protein is Urease accessory protein UreE of Helicobacter pylori (strain Shi470).